The primary structure comprises 232 residues: tRNA1(Val) (adenine(37)-N6)-methyltransferase (232 aa).

Belongs to the methyltransferase superfamily. tRNA (adenine-N(6)-)-methyltransferase family.

The protein localises to the cytoplasm. It catalyses the reaction adenosine(37) in tRNA1(Val) + S-adenosyl-L-methionine = N(6)-methyladenosine(37) in tRNA1(Val) + S-adenosyl-L-homocysteine + H(+). Functionally, specifically methylates the adenine in position 37 of tRNA(1)(Val) (anticodon cmo5UAC). The sequence is that of tRNA1(Val) (adenine(37)-N6)-methyltransferase from Haemophilus influenzae (strain PittEE).